The chain runs to 194 residues: MGMSQNNSTLVAPQPKGIIDPATGKPVGSNDAYFTEINDELADKGFLVTSTDELITWARTGSLMWMQFGLACCAVEGLMQASGPRYDMERFGVAPRASPRQSDVMIVAGTLTNKMAPALRKVYDQMPEPRYVISMGSCANGGGYYHYSYAVVRGCDRVVPVDIYVPGCPPTAEALLYGVLLLQKKIRRTGTIER.

The span at 1 to 11 (MGMSQNNSTLV) shows a compositional bias: polar residues. The disordered stretch occupies residues 1–22 (MGMSQNNSTLVAPQPKGIIDPA). Residues Cys72, Cys73, Cys138, and Cys168 each coordinate [4Fe-4S] cluster.

Belongs to the complex I 20 kDa subunit family. In terms of assembly, NDH-1 is composed of 14 different subunits. Subunits NuoB, C, D, E, F, and G constitute the peripheral sector of the complex. [4Fe-4S] cluster serves as cofactor.

It localises to the cell inner membrane. It catalyses the reaction a quinone + NADH + 5 H(+)(in) = a quinol + NAD(+) + 4 H(+)(out). NDH-1 shuttles electrons from NADH, via FMN and iron-sulfur (Fe-S) centers, to quinones in the respiratory chain. The immediate electron acceptor for the enzyme in this species is believed to be ubiquinone. Couples the redox reaction to proton translocation (for every two electrons transferred, four hydrogen ions are translocated across the cytoplasmic membrane), and thus conserves the redox energy in a proton gradient. The polypeptide is NADH-quinone oxidoreductase subunit B (Agrobacterium fabrum (strain C58 / ATCC 33970) (Agrobacterium tumefaciens (strain C58))).